We begin with the raw amino-acid sequence, 268 residues long: LOB domain-containing protein 22 (268 aa).

Positions 1-31 are disordered; the sequence is MPSGKPSSVFPLHPKPTPLKPSSSTSSSNNN. Residues 22 to 31 are compositionally biased toward low complexity; the sequence is SSSTSSSNNN. One can recognise an LOB domain in the interval 35 to 136; it reads QACAACKYQR…NELEIVLQQL (102 aa).

Belongs to the LOB domain-containing protein family.

The polypeptide is LOB domain-containing protein 22 (LBD22) (Arabidopsis thaliana (Mouse-ear cress)).